Consider the following 285-residue polypeptide: sn-2 palmitoyl-lipid 9-desaturase (285 aa).

2 helical membrane-spanning segments follow: residues 20–40 (WINV…PWFF) and 44–64 (ALGL…CLGY). Positions 65–70 (HRLLSH) match the Histidine box-1 motif. A helical transmembrane segment spans residues 81 to 101 (YAIALIGALALQGGPIFWVGG). Positions 102–106 (HRQHH) match the Histidine box-2 motif. Residues 169-189 (IPFALLLYVLGGWPFVFYGVF) traverse the membrane as a helical segment. Residues 239 to 243 (HHTYP) carry the Histidine box-3 motif.

The protein belongs to the fatty acid desaturase type 2 family. It depends on Fe(2+) as a cofactor.

Its subcellular location is the membrane. The enzyme catalyses a 1-acyl-2-hexadecanoyl-glycerolipid + 2 reduced [2Fe-2S]-[ferredoxin] + O2 + 2 H(+) = a 1-acyl-2-[(9Z)-hexadecenoyl]-glycerolipid + 2 oxidized [2Fe-2S]-[ferredoxin] + 2 H2O. It functions in the pathway lipid metabolism; fatty acid biosynthesis. Desaturase involved in fatty acid biosynthesis. Introduces a double bond at carbon 9 of palmitoyl groups (16:0) attached to the sn-2 position of the glycerol moiety of membrane glycerolipids. This chain is sn-2 palmitoyl-lipid 9-desaturase, found in Nostoc sp. (strain 36).